The chain runs to 273 residues: Type II iodothyronine deiodinase (273 aa).

Residues 1 to 9 (MGILSVDLL) lie on the Lumenal side of the membrane. A helical; Signal-anchor for type III membrane protein membrane pass occupies residues 10 to 34 (ITLQILPVFFSNCLFLALYDSVILL). Topologically, residues 35 to 273 (KHVVLLLSRS…KRUKKTRLAG (239 aa)) are cytoplasmic. The active site involves U133. Non-standard amino acids (selenocysteine) are located at U133 and U266.

It belongs to the iodothyronine deiodinase family. As to quaternary structure, predominantly monomer. Can form homodimers but homodimerization is not essential for enzyme activity. Interacts with USP20 and USP33. Interacts with MARCHF6. In terms of processing, ubiquitinated by MARCHF6, leading to its degradation by the proteasome. Deubiquitinated by USP20 and USP33. In terms of tissue distribution, isoform 1 is expressed in the lung, trachea, kidney, heart, skeletal muscle, placenta, fetal brain and several regions of the adult brain. Isoform 2 is expressed in the brain, heart, kidney and trachea.

The protein resides in the endoplasmic reticulum membrane. It catalyses the reaction 3,3',5-triiodo-L-thyronine + iodide + A + H(+) = L-thyroxine + AH2. The catalysed reaction is 3,3'-diiodo-L-thyronine + iodide + A + H(+) = 3,3',5'-triiodo-L-thyronine + AH2. It carries out the reaction 3'-iodo-L-thyronine + iodide + A + H(+) = 3',5'-diiodo-L-thyronine + AH2. The enzyme catalyses 3,3'-diiodothyronamine + iodide + A + H(+) = 3,3',5'-triiodothyronamine + AH2. It catalyses the reaction 3'-iodothyronamine + iodide + A + H(+) = 3',5'-diiodothyronamine + AH2. Its function is as follows. Plays a crucial role in the metabolism of thyroid hormones (TH) and has specific roles in TH activation and inactivation by deiodination. Catalyzes the deiodination of L-thyroxine (T4) to 3,5,3'-triiodothyronine (T3), 3,3',5'-triiodothyronine (rT3) to 3,3'-diiodothyronine (3,3'-T2) and 3',5'-diiodothyronine (3',5'-T2) to 3'-monoiodothyronine (3'-T1) via outer-ring deiodination (ORD). Catalyzes the phenolic ring deiodinations of 3,3',5'-triiodothyronamine and 3',5'- diiodothyronamine. In Homo sapiens (Human), this protein is Type II iodothyronine deiodinase (DIO2).